A 374-amino-acid polypeptide reads, in one-letter code: Chaperone protein DnaJ (374 aa).

The J domain maps to 4–68 (DYYEILGVSR…EMKARFDRFG (65 aa)). A CR-type zinc finger spans residues 132-214 (GGDKELTIKH…CGGRGQKEAT (83 aa)). Zn(2+) contacts are provided by C145, C148, C162, C165, C188, C191, C202, and C205. 4 CXXCXGXG motif repeats span residues 145-152 (CGTCNGSG), 162-169 (CSTCGGTG), 188-195 (CPSCNGSG), and 202-209 (CVDCGGRG).

The protein belongs to the DnaJ family. As to quaternary structure, homodimer. Zn(2+) is required as a cofactor.

It is found in the cytoplasm. Participates actively in the response to hyperosmotic and heat shock by preventing the aggregation of stress-denatured proteins and by disaggregating proteins, also in an autonomous, DnaK-independent fashion. Unfolded proteins bind initially to DnaJ; upon interaction with the DnaJ-bound protein, DnaK hydrolyzes its bound ATP, resulting in the formation of a stable complex. GrpE releases ADP from DnaK; ATP binding to DnaK triggers the release of the substrate protein, thus completing the reaction cycle. Several rounds of ATP-dependent interactions between DnaJ, DnaK and GrpE are required for fully efficient folding. Also involved, together with DnaK and GrpE, in the DNA replication of plasmids through activation of initiation proteins. This chain is Chaperone protein DnaJ, found in Trichodesmium erythraeum (strain IMS101).